Here is a 381-residue protein sequence, read N- to C-terminus: Pre-mRNA-splicing factor cwf28 (381 aa).

A disordered region spans residues methionine 1–leucine 21. Phosphoserine is present on residues serine 11 and serine 13. A coiled-coil region spans residues alanine 104–asparagine 157. A disordered region spans residues leucine 262–leucine 381. Over residues lysine 274–serine 285 the composition is skewed to polar residues. 2 positions are modified to phosphoserine: serine 275 and serine 277. Composition is skewed to basic and acidic residues over residues leucine 287–leucine 297, lysine 306–serine 332, and serine 362–tyrosine 375.

This sequence belongs to the SPP2 family. Belongs to the 40S cdc5-associated complex (or cwf complex), a spliceosome sub-complex reminiscent of a late-stage spliceosome composed of the U2, U5 and U6 snRNAs and at least brr2, cdc5, cwf2/prp3, cwf3/syf1, cwf4/syf3, cwf5/ecm2, spp42/cwf6, cwf7/spf27, cwf8, cwf9, cwf10, cwf11, cwf12, prp45/cwf13, cwf14, cwf15, cwf16, cwf17, cwf18, cwf19, cwf20, cwf21, cwf22, cwf23, cwf24, cwf25, cwf26, cyp7/cwf27, cwf28, cwf29/ist3, lea1, msl1, prp5/cwf1, prp10, prp12/sap130, prp17, prp22, sap61, sap62, sap114, sap145, slu7, smb1, smd1, smd3, smf1, smg1 and syf2.

The protein localises to the nucleus. Involved in spliceosome maturation and the first step of pre-mRNA splicing. The polypeptide is Pre-mRNA-splicing factor cwf28 (cwf28) (Schizosaccharomyces pombe (strain 972 / ATCC 24843) (Fission yeast)).